Consider the following 66-residue polypeptide: Large ribosomal subunit protein bL35 (66 aa).

The protein belongs to the bacterial ribosomal protein bL35 family.

The protein is Large ribosomal subunit protein bL35 of Hyphomonas neptunium (strain ATCC 15444).